The sequence spans 481 residues: Glutamate--glyoxylate aminotransferase 1 (481 aa).

Lys-291 is modified (N6-(pyridoxal phosphate)lysine). Residues 479–481 (SKM) carry the Peroxisomal targeting signal motif.

It belongs to the class-I pyridoxal-phosphate-dependent aminotransferase family. Alanine aminotransferase subfamily. In terms of assembly, homodimer. The cofactor is pyridoxal 5'-phosphate. Post-translationally, the N-terminus is blocked. As to expression, mostly expressed in leaves, and, to a lower extent, in shoots, stems, flowers, seedlings and green siliques.

The protein resides in the peroxisome. It catalyses the reaction L-alanine + 2-oxoglutarate = pyruvate + L-glutamate. It carries out the reaction glyoxylate + L-alanine = glycine + pyruvate. The catalysed reaction is glycine + 2-oxoglutarate = glyoxylate + L-glutamate. It participates in amino-acid biosynthesis; glycine biosynthesis; glycine from glyoxylate: step 1/1. It functions in the pathway photosynthesis; C4 acid pathway. Its pathway is amino-acid degradation; L-alanine degradation via transaminase pathway; pyruvate from L-alanine: step 1/1. Functionally, catalyzes the glutamate:glyoxylate (GGT or GGAT), alanine:glyoxylate (AGT), alanine:2-oxoglutarate (AKT) and glutamate:pyruvate (GPT) aminotransferase reactions in peroxisomes. Required for abscisic acid (ABA)- and stress-mediated responses in an H(2)O(2)-dependent manner. Functions as a photorespiratory aminotransferase that modulates amino acid content during photorespiration (GGAT activity); promotes serine, glycine and citrulline metabolism in response to light. The chain is Glutamate--glyoxylate aminotransferase 1 (GGAT1) from Arabidopsis thaliana (Mouse-ear cress).